A 102-amino-acid chain; its full sequence is MAEIQTVTAPVFLNQANSSSVNKHTPAEAQETFKQALSQAINNVNDLQKVSAEKTELLAKGKIEDLHDVMITGQKASITLSATVEIRNKVIEAYQEIMRMQV.

It belongs to the FliE family.

The protein resides in the bacterial flagellum basal body. This chain is Flagellar hook-basal body complex protein FliE, found in Halalkalibacterium halodurans (strain ATCC BAA-125 / DSM 18197 / FERM 7344 / JCM 9153 / C-125) (Bacillus halodurans).